The following is a 355-amino-acid chain: UDP-3-O-acylglucosamine N-acyltransferase (355 aa).

His258 (proton acceptor) is an active-site residue.

It belongs to the transferase hexapeptide repeat family. LpxD subfamily. As to quaternary structure, homotrimer.

It carries out the reaction a UDP-3-O-[(3R)-3-hydroxyacyl]-alpha-D-glucosamine + a (3R)-hydroxyacyl-[ACP] = a UDP-2-N,3-O-bis[(3R)-3-hydroxyacyl]-alpha-D-glucosamine + holo-[ACP] + H(+). Its pathway is bacterial outer membrane biogenesis; LPS lipid A biosynthesis. Catalyzes the N-acylation of UDP-3-O-acylglucosamine using 3-hydroxyacyl-ACP as the acyl donor. Is involved in the biosynthesis of lipid A, a phosphorylated glycolipid that anchors the lipopolysaccharide to the outer membrane of the cell. The chain is UDP-3-O-acylglucosamine N-acyltransferase from Bradyrhizobium diazoefficiens (strain JCM 10833 / BCRC 13528 / IAM 13628 / NBRC 14792 / USDA 110).